A 465-amino-acid chain; its full sequence is Iron-sulfur cluster assembly SufBD family protein SE_0610 (465 aa).

Belongs to the iron-sulfur cluster assembly SufBD family.

In Staphylococcus epidermidis (strain ATCC 12228 / FDA PCI 1200), this protein is Iron-sulfur cluster assembly SufBD family protein SE_0610.